The sequence spans 84 residues: Large ribosomal subunit protein bL27 (84 aa).

The tract at residues 1-20 (MAHKKAGGSTRNGRDSNPKY) is disordered.

It belongs to the bacterial ribosomal protein bL27 family.

In Francisella philomiragia subsp. philomiragia (strain ATCC 25017 / CCUG 19701 / FSC 153 / O#319-036), this protein is Large ribosomal subunit protein bL27.